We begin with the raw amino-acid sequence, 356 residues long: Branched-chain-amino-acid transaminase 1 (356 aa).

Lys197 bears the N6-(pyridoxal phosphate)lysine mark.

This sequence belongs to the class-IV pyridoxal-phosphate-dependent aminotransferase family. Pyridoxal 5'-phosphate is required as a cofactor.

The catalysed reaction is L-leucine + 2-oxoglutarate = 4-methyl-2-oxopentanoate + L-glutamate. It catalyses the reaction L-isoleucine + 2-oxoglutarate = (S)-3-methyl-2-oxopentanoate + L-glutamate. It carries out the reaction L-valine + 2-oxoglutarate = 3-methyl-2-oxobutanoate + L-glutamate. Its pathway is amino-acid biosynthesis; L-isoleucine biosynthesis; L-isoleucine from 2-oxobutanoate: step 4/4. The protein operates within amino-acid biosynthesis; L-leucine biosynthesis; L-leucine from 3-methyl-2-oxobutanoate: step 4/4. It functions in the pathway amino-acid biosynthesis; L-valine biosynthesis; L-valine from pyruvate: step 4/4. With respect to regulation, inhibited by canaline. Transaminates branched-chain amino acids and ketoglutarate. Involved in the final step of the methionine regeneration pathway, where ketomethiobutyrate (KMTB) is converted to methionine via a transamination. The amino donor preference is isoleucine, leucine, valine, phenylalanine, and tyrosine. This is Branched-chain-amino-acid transaminase 1 (ilvE) from Bacillus subtilis (strain 168).